We begin with the raw amino-acid sequence, 1422 residues long: Guanine nucleotide exchange factor subunit RIC1 (1422 aa).

WD repeat units follow at residues 64-103 (TQFGSYKQAEWRPDSTMIAVSTANGYILFFHITSSRGDKY) and 304-343 (NKTGAVKLIRWSPDNSAVIVTWEYGGLSLWSVFGAQLICT). Disordered regions lie at residues 442–462 (NPKYSSARAERMPRHEKSPFA) and 986–1005 (SGESETPPSTPTSQEPSSSG). The span at 449–460 (RAERMPRHEKSP) shows a compositional bias: basic and acidic residues. Thr991 and Thr995 each carry phosphothreonine. A phosphoserine mark is found at Ser1014, Ser1016, Ser1018, Ser1036, and Ser1171. Residues 1021–1048 (AENVPPGKFGLQKTLSMPTGPSGKRWSK) are disordered. Disordered regions lie at residues 1179 to 1198 (THRDTDRASSPGPQMQDAFL) and 1355 to 1422 (DTFQ…CSVS). Residues 1378 to 1396 (GSCSHGSISQSEPGSNNVV) show a composition bias toward polar residues. Positions 1403–1412 (TTQADEEEPL) are enriched in acidic residues.

The protein belongs to the RIC1 family. As to quaternary structure, forms a complex with RGP1; the interaction enhances RAB6A GTPase activity. Interacts (via central domain) with RGP1. Interacts with RAB6A; the interaction is direct with a preference for RAB6A-GDP. Interacts (via C-terminus domain) with RAB33B; the interaction is direct with a preference for RAB33B-GTP. Interacts with GJA1. As to expression, expressed in the eye lens.

It localises to the cytoplasm. The protein localises to the cytosol. The protein resides in the membrane. The RIC1-RGP1 complex acts as a guanine nucleotide exchange factor (GEF), which activates RAB6A by exchanging bound GDP for free GTP, and may thereby be required for efficient fusion of endosome-derived vesicles with the Golgi compartment. The RIC1-RGP1 complex participates in the recycling of mannose-6-phosphate receptors. Required for phosphorylation and localization of GJA1. Is a regulator of procollagen transport and secretion, and is required for correct cartilage morphogenesis and development of the craniofacial skeleton. This is Guanine nucleotide exchange factor subunit RIC1 from Mus musculus (Mouse).